A 125-amino-acid chain; its full sequence is MQFQGRSRRKYTGAKLKSARGKRKFELGREPAATHVNDTKRKNVPTHGGNRKVRLLQENIANVTNPADGKTIVSAIETVVDNAANAHYVRRNIITKGSVIQTAAGNARVTSRPGQDGVVNAILIE.

A compositionally biased stretch (basic residues) spans 1-23 (MQFQGRSRRKYTGAKLKSARGKR). Positions 1 to 34 (MQFQGRSRRKYTGAKLKSARGKRKFELGREPAAT) are disordered.

Belongs to the eukaryotic ribosomal protein eS8 family. In terms of assembly, part of the 30S ribosomal subunit.

The sequence is that of Small ribosomal subunit protein eS8 from Methanococcoides burtonii (strain DSM 6242 / NBRC 107633 / OCM 468 / ACE-M).